The chain runs to 304 residues: Porphobilinogen deaminase (304 aa).

At Cys241 the chain carries S-(dipyrrolylmethanemethyl)cysteine.

Belongs to the HMBS family. In terms of assembly, monomer. The cofactor is dipyrromethane.

The catalysed reaction is 4 porphobilinogen + H2O = hydroxymethylbilane + 4 NH4(+). Its pathway is porphyrin-containing compound metabolism; protoporphyrin-IX biosynthesis; coproporphyrinogen-III from 5-aminolevulinate: step 2/4. Functionally, tetrapolymerization of the monopyrrole PBG into the hydroxymethylbilane pre-uroporphyrinogen in several discrete steps. The protein is Porphobilinogen deaminase of Ruthia magnifica subsp. Calyptogena magnifica.